The following is a 177-amino-acid chain: Gamma-crystallin M1-2 (177 aa).

Beta/gamma crystallin 'Greek key' domains follow at residues 2–40 and 41–83; these read GKII…RVEN and GCWM…RLLS. Residues 84–90 are connecting peptide; sequence QNLGIGT. Beta/gamma crystallin 'Greek key' domains lie at 91–131 and 132–174; these read NKLR…NVLD and GYWI…RRVI.

This sequence belongs to the beta/gamma-crystallin family. As to quaternary structure, monomer.

Functionally, crystallins are the dominant structural components of the vertebrate eye lens. The protein is Gamma-crystallin M1-2 of Aquarana catesbeiana (American bullfrog).